The primary structure comprises 162 residues: Probable cytosine deaminase (162 aa).

One can recognise a CMP/dCMP-type deaminase domain in the interval 8–132 (EKDLAYLREA…PLYINSRDIL (125 aa)). His59 serves as a coordination point for Zn(2+). Glu61 serves as the catalytic Proton donor. Cys87 and Cys90 together coordinate Zn(2+). Asp159 contributes to the substrate binding site.

The protein belongs to the cytidine and deoxycytidylate deaminase family. Homodimer. The cofactor is Zn(2+).

The protein resides in the cytoplasm. Its subcellular location is the nucleus. The enzyme catalyses cytosine + H2O + H(+) = uracil + NH4(+). It functions in the pathway pyrimidine metabolism; UMP biosynthesis via salvage pathway; uracil from cytosine: step 1/1. In terms of biological role, catalyzes the hydrolytic deamination of cytosine to uracil or 5-methylcytosine to thymine. Is involved in the pyrimidine salvage pathway, which allows the cell to utilize cytosine for pyrimidine nucleotide synthesis. In Schizosaccharomyces pombe (strain 972 / ATCC 24843) (Fission yeast), this protein is Probable cytosine deaminase.